We begin with the raw amino-acid sequence, 465 residues long: Cysteine--tRNA ligase (465 aa).

A Zn(2+)-binding site is contributed by Cys-29. A 'HIGH' region motif is present at residues 31-41; that stretch reads PTVYNYIHIGN. Cys-209, His-234, and Glu-238 together coordinate Zn(2+). Residues 266-270 carry the 'KMSKS' region motif; the sequence is KMSKS. Residue Lys-269 participates in ATP binding. A Phosphoserine modification is found at Ser-270.

This sequence belongs to the class-I aminoacyl-tRNA synthetase family. Monomer. It depends on Zn(2+) as a cofactor.

It is found in the cytoplasm. It catalyses the reaction tRNA(Cys) + L-cysteine + ATP = L-cysteinyl-tRNA(Cys) + AMP + diphosphate. This chain is Cysteine--tRNA ligase, found in Bacillus cereus (strain G9842).